We begin with the raw amino-acid sequence, 944 residues long: MRDLDFTNILDVELLQKQCDAVAEANRNRPDVLRADLLAVLKKASTEGRQKAREALMADGGGLNCAYRISWLQDQITTVLYNFATAHIFPQQKDKFAVTAVGGYGRDTLAPGSDIDLLFLFLPRPAEETHKAVEFMLYVLWDMGFKVGHATRTVEECIALSKSDMTIRTAILEMRYICGLQRLETELETRFDKEIVTGTGPEFIAAKLAERDERHRKAGDTRYLVEPNVKEGKGGLRDLHTLFWISKYYYHVRDQAELVKLGVLSKHEYRLLEKADDFLWAVRCHMHFLTGKAEERLSFDIQREIAEAFGYHTRPGLSAVERFMKHYFLVAKDVGDLTRILCAALEDQQAKSIPGLTGVISRFTHRNRKIAGSVEFVEDRGRIALADPEVFKRDPVNIIRLFHVADINGLEFHPDALKRVTRSLALIDNALRENDEANRLFMSILTSKRDPALILRRMNEAGVLGRFIPEFGKIVAMMQFNMYHHYTVDEHLIRTVDILSEIDKGRAEDLHPLANKLMPGIEDREALYVAVLLHDIAKGRQEDHSIAGARVARKLCVRFGLSQKQTEIVVWLIEEHLTMSMVAQTRDLTDRKTITDFADRVQSLDRLKMLLILTICDIRAVGPGVWNGWKGQLLRTLYYETELLLAGGFSEVSRKERANAAAEALHSALADWSQKDRNTYTKLHYQPYLLSVPLEDQIRHAHFIRQADKAGQALATMVRTDSFHAITEITVLSPDHPRLLAVIAGACAAAGANIVDAQIFTTSDGRALDTIHVSREFTDDADELRRAATIGRMIEDVLSGRKRLPEVIATRARNRKKSKAFVIPPSVNITNSLSNKFTVIEVECLDRPGLLSEITAVLSDLSLDIQSARITTFGEKVIDTFYVTDLVGQKISGDSKRANITARMKAVMAEEEDELRERMPSGIIAPAATARTPPASEKKAGSPI.

The tract at residues 1 to 371 (MRDLDFTNIL…RFTHRNRKIA (371 aa)) is uridylyltransferase. The interval 372-727 (GSVEFVEDRG…VRTDSFHAIT (356 aa)) is uridylyl-removing. Positions 488–604 (VDEHLIRTVD…TDFADRVQSL (117 aa)) constitute an HD domain. ACT domains are found at residues 728–809 (EITV…EVIA) and 839–918 (VIEV…LRER). The tract at residues 911-944 (EEDELRERMPSGIIAPAATARTPPASEKKAGSPI) is disordered. Over residues 925 to 935 (APAATARTPPA) the composition is skewed to low complexity.

The protein belongs to the GlnD family. Mg(2+) is required as a cofactor.

It carries out the reaction [protein-PII]-L-tyrosine + UTP = [protein-PII]-uridylyl-L-tyrosine + diphosphate. The catalysed reaction is [protein-PII]-uridylyl-L-tyrosine + H2O = [protein-PII]-L-tyrosine + UMP + H(+). Its activity is regulated as follows. Uridylyltransferase (UTase) activity is inhibited by glutamine, while glutamine likely activates uridylyl-removing (UR) activity. In terms of biological role, modifies, by uridylylation and deuridylylation, the PII regulatory proteins GlnB and GlnK, in response to the nitrogen status of the cell that GlnD senses through the glutamine level. Under low glutamine levels, catalyzes the conversion of the PII proteins and UTP to PII-UMP and PPi, while under higher glutamine levels, GlnD likely hydrolyzes PII-UMP to PII and UMP (deuridylylation). Thus, controls uridylylation state and activity of the PII proteins, and plays an important role in the regulation of nitrogen metabolism. In Rhizobium leguminosarum bv. viciae, this protein is Bifunctional uridylyltransferase/uridylyl-removing enzyme.